The primary structure comprises 336 residues: Holliday junction branch migration complex subunit RuvB (336 aa).

Positions 1–182 are large ATPase domain (RuvB-L); that stretch reads MKERIVNLET…FGMSFRMQFY (182 aa). ATP is bound by residues L21, R22, G63, K66, T67, S68, 129-131, R172, Y182, and R219; that span reads EDF. T67 provides a ligand contact to Mg(2+). The small ATPAse domain (RuvB-S) stretch occupies residues 183–253; the sequence is SPSELALIIK…ITLHALNELG (71 aa). Residues 256–336 form a head domain (RuvB-H) region; it reads ELGFDEADLA…IPTLNPQTLF (81 aa). 2 residues coordinate DNA: R310 and R315.

The protein belongs to the RuvB family. As to quaternary structure, homohexamer. Forms an RuvA(8)-RuvB(12)-Holliday junction (HJ) complex. HJ DNA is sandwiched between 2 RuvA tetramers; dsDNA enters through RuvA and exits via RuvB. An RuvB hexamer assembles on each DNA strand where it exits the tetramer. Each RuvB hexamer is contacted by two RuvA subunits (via domain III) on 2 adjacent RuvB subunits; this complex drives branch migration. In the full resolvosome a probable DNA-RuvA(4)-RuvB(12)-RuvC(2) complex forms which resolves the HJ.

The protein localises to the cytoplasm. The catalysed reaction is ATP + H2O = ADP + phosphate + H(+). In terms of biological role, the RuvA-RuvB-RuvC complex processes Holliday junction (HJ) DNA during genetic recombination and DNA repair, while the RuvA-RuvB complex plays an important role in the rescue of blocked DNA replication forks via replication fork reversal (RFR). RuvA specifically binds to HJ cruciform DNA, conferring on it an open structure. The RuvB hexamer acts as an ATP-dependent pump, pulling dsDNA into and through the RuvAB complex. RuvB forms 2 homohexamers on either side of HJ DNA bound by 1 or 2 RuvA tetramers; 4 subunits per hexamer contact DNA at a time. Coordinated motions by a converter formed by DNA-disengaged RuvB subunits stimulates ATP hydrolysis and nucleotide exchange. Immobilization of the converter enables RuvB to convert the ATP-contained energy into a lever motion, pulling 2 nucleotides of DNA out of the RuvA tetramer per ATP hydrolyzed, thus driving DNA branch migration. The RuvB motors rotate together with the DNA substrate, which together with the progressing nucleotide cycle form the mechanistic basis for DNA recombination by continuous HJ branch migration. Branch migration allows RuvC to scan DNA until it finds its consensus sequence, where it cleaves and resolves cruciform DNA. This is Holliday junction branch migration complex subunit RuvB from Helicobacter pylori (strain Shi470).